A 258-amino-acid polypeptide reads, in one-letter code: Oxidoreductase fscI (258 aa).

The NADP(+) site is built by L34, R59, D82, N109, and K141. The Proton donor role is filled by S163. R193 serves as a coordination point for NADP(+).

It belongs to the short-chain dehydrogenases/reductases (SDR) family.

Its pathway is secondary metabolite biosynthesis. Oxidoreductase; part of the fragmented gene cluster that mediates the biosynthesis of fusarochromene, a tryptophan-derived metabolite closely related to a group of mycotoxins including fusarochromanone. Within the pathway, fscI catalyzes the formation of the chromene ring from the prenyl moity added by the prenyltransferase fscG. The first step of the pathway is the epimerization of L-tryptophan to D-tryptophan in the presence of the NRPS-like tryptophan epimerase fscC. D-tryptophan is subsequently hydroxylated by the tryptophan 6-hydroxylase fscE to yield 6-hydroxytryptophan. The pyrrole ring undergoes cleavaged by the tryptophan 2,3-dioxygenase fscD and is finally converted to 4-hydroxykyrunenine by the hydrolase fscH. The NRPS-like oxidoreductase fscA reduces the carboxyl group to primary alcohol and the DMATS-type prenyltransferase fscG performs prenylation, followed by the formation of a chromene ring catalyzed by the oxidoreductase fscI, which leads to desacetylfusarochromene. Epoxidation by fscF and rearrangement reactions of chromene double bonds convert compound desacetylfusarochromene to fusarochromanones. Although specific acetyltransferases were not found near the fsc gene cluster, several predicted enzymes containing the N-acetyltransferase superfamily domain are present in the genome of F.equiseti. These predicted enzymes may have the potential to convert desacetylfusarochromene to fusarochromene. The chain is Oxidoreductase fscI from Fusarium equiseti (Fusarium scirpi).